We begin with the raw amino-acid sequence, 389 residues long: MSIKKDYDVIVVGAGSMGMAAGYYLSKQGVKTLLVDSFHPPHTNGSHHGDTRIIRHAYGEGREYVPFALRAQELWYELEKETHHKIFTKTGVLVFGPKGEAPFVAETMEAAKEHSLDVDLLEGSEINKRWPGVTVPENYNAIFEKNSGVLFSENCIRAYRELAEANGAKVLTYTPVEDFEIAEDFVKIQTAYGSFTASKLIVSMGAWNSKLLSKLNIEIPLQPYRQVVGFFECDEKKYSNTHGYPAFMVEVPTGIYYGFPSFGGCGLKIGYHTYGQKIDPDTINREFGIYPEDEGNIRKFLETYMPGATGELKSGDVCMYTKTPDEHFVIDLHPQFSNVAIAAGFSGHGFKFSSVVGETLSQLAVTGKTEHDISIFSINRPALKQKETI.

8-38 (DVIVVGAGSMGMAAGYYLSKQGVKTLLVDSF) is a binding site for FAD. Cysteine 318 carries the post-translational modification S-8alpha-FAD cysteine.

This sequence belongs to the MSOX/MTOX family. MSOX subfamily. Monomer. FAD serves as cofactor.

The protein resides in the cytoplasm. It catalyses the reaction sarcosine + O2 + H2O = formaldehyde + glycine + H2O2. Its function is as follows. Catalyzes the oxidative demethylation of sarcosine. The protein is Monomeric sarcosine oxidase (soxA) of Arthrobacter sp. (strain TE1826).